Consider the following 278-residue polypeptide: Digeranylgeranylglyceryl phosphate synthase (278 aa).

Helical transmembrane passes span Leu-12–Phe-32, Phe-34–Gly-54, Ile-92–Leu-112, Ile-129–Ala-149, Ile-199–Thr-219, Ile-221–Phe-241, and Ser-257–Phe-277.

Belongs to the UbiA prenyltransferase family. DGGGP synthase subfamily. Mg(2+) serves as cofactor.

The protein localises to the cell membrane. It catalyses the reaction sn-3-O-(geranylgeranyl)glycerol 1-phosphate + (2E,6E,10E)-geranylgeranyl diphosphate = 2,3-bis-O-(geranylgeranyl)-sn-glycerol 1-phosphate + diphosphate. Its pathway is membrane lipid metabolism; glycerophospholipid metabolism. Functionally, prenyltransferase that catalyzes the transfer of the geranylgeranyl moiety of geranylgeranyl diphosphate (GGPP) to the C2 hydroxyl of (S)-3-O-geranylgeranylglyceryl phosphate (GGGP). This reaction is the second ether-bond-formation step in the biosynthesis of archaeal membrane lipids. In Methanococcus vannielii (strain ATCC 35089 / DSM 1224 / JCM 13029 / OCM 148 / SB), this protein is Digeranylgeranylglyceryl phosphate synthase.